We begin with the raw amino-acid sequence, 299 residues long: Nitrogenase iron protein (299 aa).

Position 8–15 (8–15) interacts with ATP; the sequence is GKGGIGKS. Position 96 (Cys-96) interacts with [4Fe-4S] cluster. ADP-ribosylarginine; by dinitrogenase reductase ADP-ribosyltransferase is present on Arg-99. Cys-130 lines the [4Fe-4S] cluster pocket.

The protein belongs to the NifH/BchL/ChlL family. Homodimer. Requires [4Fe-4S] cluster as cofactor. Post-translationally, the reversible ADP-ribosylation of Arg-99 inactivates the nitrogenase reductase and regulates nitrogenase activity.

It catalyses the reaction N2 + 8 reduced [2Fe-2S]-[ferredoxin] + 16 ATP + 16 H2O = H2 + 8 oxidized [2Fe-2S]-[ferredoxin] + 2 NH4(+) + 16 ADP + 16 phosphate + 6 H(+). The key enzymatic reactions in nitrogen fixation are catalyzed by the nitrogenase complex, which has 2 components: the iron protein and the molybdenum-iron protein. This chain is Nitrogenase iron protein, found in Gloeothece citriformis (strain PCC 7424) (Cyanothece sp. (strain PCC 7424)).